Consider the following 171-residue polypeptide: Squamosa promoter-binding protein 2 (171 aa).

Disordered stretches follow at residues 20 to 46 and 57 to 76; these read GDEGSDFEEEEEGEDEEEEEQERVVKV and KLNLGEGSGGKSGEKHTASG. Residues 22 to 40 show a composition bias toward acidic residues; it reads EGSDFEEEEEGEDEEEEEQ. The SBP-type zinc finger occupies 82-159; the sequence is QPCCLVENCG…AGHNERRRKS (78 aa). The Zn(2+) site is built by Cys-85, Cys-90, Cys-107, His-110, Cys-126, Cys-129, His-133, and Cys-145. Residues 142–158 carry the Bipartite nuclear localization signal motif; sequence KRSCRRRLAGHNERRRK. Residues 149-158 show a composition bias toward basic residues; that stretch reads LAGHNERRRK. The interval 149 to 171 is disordered; it reads LAGHNERRRKSSLESHKEGRSPR. A compositionally biased stretch (basic and acidic residues) spans 159–171; sequence SSLESHKEGRSPR.

It is found in the nucleus. Probable transcriptional factor. Binds to the promoter of the SQUAMOSA gene. In Antirrhinum majus (Garden snapdragon), this protein is Squamosa promoter-binding protein 2 (SBP2).